Consider the following 969-residue polypeptide: Chromosome transmission fidelity protein 18 homolog (969 aa).

The disordered stretch occupies residues 30-97; sequence EGTRDQAPPG…APSSPMVKRP (68 aa). Thr51 bears the Phosphothreonine mark. Ser221 is modified (phosphoserine). Disordered stretches follow at residues 250-269 and 318-340; these read SEGEEAVLEGPPAEEPAPGQ and RKPRPGVETTRVGKEATAPGKWK. Positions 257-268 are enriched in low complexity; that stretch reads LEGPPAEEPAPG. An ATP-binding site is contributed by 369–376; the sequence is GPPGLGKT. The segment at 856-889 is disordered; the sequence is ARSGPQVDQGSSGPASLWTDSGEKGTRQPAPRNH. The segment covering 876–889 has biased composition (basic and acidic residues); that stretch reads SGEKGTRQPAPRNH.

The protein belongs to the activator 1 small subunits family. CTF18 subfamily. As to quaternary structure, component of the CTF18-RFC complex, which consists of CTF18, CTF8, DCC1, RFC2, RFC3, RFC4 and RFC5. During assembly of the CTF18-RFC complex, CTF18 may first assemble into a subcomplex with RFC2, RFC3, RFC4 and RFC5. CTF18 then interacts directly with CTF8, which in turn interacts with DCC1. The CTF18-RFC complex associates with PCNA and with DNA polymerase POLH. The CTF18-RFC complex does not interact with the Rad9/Rad1/Hus1 complex. CTF18 interacts with SMC1A and RAD21. Interacts with DDX11.

It is found in the nucleus. Its function is as follows. Chromosome cohesion factor involved in sister chromatid cohesion and fidelity of chromosome transmission. Component of one of the cell nuclear antigen loader complexes, CTF18-replication factor C (CTF18-RFC), which consists of CTF18, CTF8, DCC1, RFC2, RFC3, RFC4 and RFC5. The CTF18-RFC complex binds to single-stranded and primed DNAs and has weak ATPase activity that is stimulated by the presence of primed DNA, replication protein A (RPA) and by proliferating cell nuclear antigen (PCNA). The CTF18-RFC complex catalyzes the ATP-dependent loading of PCNA onto primed and gapped DNA. Interacts with and stimulates DNA polymerase POLH. During DNA repair synthesis, involved in loading DNA polymerase POLE at the sites of local damage. The polypeptide is Chromosome transmission fidelity protein 18 homolog (Chtf18) (Mus musculus (Mouse)).